The following is a 412-amino-acid chain: Mannose-6-phosphate isomerase (412 aa).

Zn(2+)-binding residues include Q99, H101, E126, and H265. Residue R284 is part of the active site.

The protein belongs to the mannose-6-phosphate isomerase type 1 family. Requires Zn(2+) as cofactor.

The protein resides in the cytoplasm. Its subcellular location is the nucleus. The catalysed reaction is D-mannose 6-phosphate = D-fructose 6-phosphate. It participates in nucleotide-sugar biosynthesis; GDP-alpha-D-mannose biosynthesis; alpha-D-mannose 1-phosphate from D-fructose 6-phosphate: step 1/2. Involved in the synthesis of the GDP-mannose and dolichol-phosphate-mannose required for a number of critical mannosyl transfer reactions. In Schizosaccharomyces pombe (strain 972 / ATCC 24843) (Fission yeast), this protein is Mannose-6-phosphate isomerase (pmi40).